The following is a 662-amino-acid chain: Transketolase (662 aa).

Residue His-28 coordinates substrate. Thiamine diphosphate is bound by residues His-68 and 115–117 (GPL). Asp-156 is a binding site for Mg(2+). Thiamine diphosphate is bound by residues Gly-157 and Asn-186. Mg(2+) contacts are provided by Asn-186 and Ile-188. Substrate-binding residues include His-261, Arg-356, and Ser-383. His-261 is a thiamine diphosphate binding site. Glu-410 serves as the catalytic Proton donor. Phe-436 contributes to the thiamine diphosphate binding site. His-460, Asp-468, and Arg-519 together coordinate substrate.

The protein belongs to the transketolase family. Homodimer. Mg(2+) is required as a cofactor. Requires Ca(2+) as cofactor. The cofactor is Mn(2+). Co(2+) serves as cofactor. It depends on thiamine diphosphate as a cofactor.

It carries out the reaction D-sedoheptulose 7-phosphate + D-glyceraldehyde 3-phosphate = aldehydo-D-ribose 5-phosphate + D-xylulose 5-phosphate. Its pathway is carbohydrate biosynthesis; Calvin cycle. The protein operates within carbohydrate degradation; pentose phosphate pathway. Catalyzes the transfer of a two-carbon ketol group from a ketose donor to an aldose acceptor, via a covalent intermediate with the cofactor thiamine pyrophosphate. The protein is Transketolase (tkt) of Staphylococcus aureus (strain MRSA252).